The following is a 100-amino-acid chain: Small ribosomal subunit protein uS14c (100 aa).

This sequence belongs to the universal ribosomal protein uS14 family. Part of the 30S ribosomal subunit.

The protein localises to the plastid. The protein resides in the chloroplast. Its function is as follows. Binds 16S rRNA, required for the assembly of 30S particles. The sequence is that of Small ribosomal subunit protein uS14c from Lactuca sativa (Garden lettuce).